Reading from the N-terminus, the 259-residue chain is ATP synthase subunit a (259 aa).

Positions 1–7 (MTNNYIN) are cleaved as a propeptide — removed in mature form. Transmembrane regions (helical) follow at residues 36–56 (FSLYTLFVVLVISLTFILSIG), 95–115 (YVPLVYTLFTFILVANLIGMV), 125–145 (LIYIIGISVSLWIGLTILGLF), 164–206 (LVPV…NLVK), and 211–253 (INYF…SYLK).

As to quaternary structure, F-type ATP synthases have 2 components, the catalytic core F(1) and the membrane-embedded component F(0), linked together by a central stalk and a peripheral stalk. The central stalk, also called rotor shaft, is often seen as part of F(1). The peripheral stalk is seen as part of F(0). F(0) contains the membrane channel next to the rotor. F-type ATP synthases form dimers but each monomer functions independently in ATP generation. The dimer consists of 18 different polypeptides: ATP1 (subunit alpha, part of F(1), 3 molecules per monomer), ATP2 (subunit beta, part of F(1), 3 molecules per monomer), ATP3 (subunit gamma, part of the central stalk), ATP4 (subunit b, part of the peripheral stalk), ATP5/OSCP (subunit 5/OSCP, part of the peripheral stalk), ATP6 (subunit a, part of the peripheral stalk), ATP7 (subunit d, part of the peripheral stalk), ATP8 (subunit 8, part of the peripheral stalk), OLI1 (subunit c, part of the rotor, 10 molecules per monomer), ATP14 (subunit h, part of the peripheral stalk), ATP15 (subunit epsilon, part of the central stalk), ATP16 (subunit delta, part of the central stalk), ATP17 (subunit f, part of the peripheral stalk), ATP18 (subunit i/j, part of the peripheral stalk). Dimer-specific subunits are ATP19 (subunit k, at interface between monomers), ATP20 (subunit g, at interface between monomers), TIM11 (subunit e, at interface between monomers). Also contains subunit L.

The protein localises to the mitochondrion inner membrane. In terms of biological role, mitochondrial membrane ATP synthase (F(1)F(0) ATP synthase or Complex V) produces ATP from ADP in the presence of a proton gradient across the membrane which is generated by electron transport complexes of the respiratory chain. F-type ATP synthases consist of two structural domains, F(1) - containing the extramembraneous catalytic core, and F(0) - containing the membrane proton channel, linked together by a central stalk and a peripheral stalk. During catalysis, ATP synthesis in the catalytic domain of F(1) is coupled via a rotary mechanism of the central stalk subunits to proton translocation. Key component of the proton channel; it may play a direct role in the translocation of protons across the membrane. The protein is ATP synthase subunit a of Pichia angusta (Yeast).